A 334-amino-acid polypeptide reads, in one-letter code: Protein-glutamate methylesterase/protein-glutamine glutaminase 2 (334 aa).

The Response regulatory domain maps to 2–120 (NIGIVNDLPL…GAAGDTTKLL (119 aa)). Position 53 is a 4-aspartylphosphate (aspartate 53). Residues 134 to 334 (PGSSRLAGAA…AGELAALARI (201 aa)) form the CheB-type methylesterase domain. Active-site residues include serine 157, histidine 184, and aspartate 277.

It belongs to the CheB family. In terms of processing, phosphorylated by CheA. Phosphorylation of the N-terminal regulatory domain activates the methylesterase activity.

It is found in the cytoplasm. It carries out the reaction [protein]-L-glutamate 5-O-methyl ester + H2O = L-glutamyl-[protein] + methanol + H(+). The catalysed reaction is L-glutaminyl-[protein] + H2O = L-glutamyl-[protein] + NH4(+). In terms of biological role, involved in chemotaxis. Part of a chemotaxis signal transduction system that modulates chemotaxis in response to various stimuli. Catalyzes the demethylation of specific methylglutamate residues introduced into the chemoreceptors (methyl-accepting chemotaxis proteins or MCP) by CheR. Also mediates the irreversible deamidation of specific glutamine residues to glutamic acid. This is Protein-glutamate methylesterase/protein-glutamine glutaminase 2 from Burkholderia orbicola (strain AU 1054).